A 691-amino-acid polypeptide reads, in one-letter code: Threonine--tRNA ligase (691 aa).

The TGS domain occupies 1-69 (MSTPEITPAA…QQDVEVAAVP (69 aa)). Positions 268 to 574 (DHRRLGQELD…LLEHYAGAFP (307 aa)) are catalytic. Positions 373, 424, and 551 each coordinate Zn(2+).

Belongs to the class-II aminoacyl-tRNA synthetase family. As to quaternary structure, homodimer. Zn(2+) serves as cofactor.

It is found in the cytoplasm. It catalyses the reaction tRNA(Thr) + L-threonine + ATP = L-threonyl-tRNA(Thr) + AMP + diphosphate + H(+). Its function is as follows. Catalyzes the attachment of threonine to tRNA(Thr) in a two-step reaction: L-threonine is first activated by ATP to form Thr-AMP and then transferred to the acceptor end of tRNA(Thr). Also edits incorrectly charged L-seryl-tRNA(Thr). The sequence is that of Threonine--tRNA ligase from Corynebacterium jeikeium (strain K411).